Reading from the N-terminus, the 161-residue chain is MYSKESCERCEEMEKIIPSGQGKKSIFLSGSIRGGRQLLETYRFIYDALEEAGAEVLSWHVADPELEKTESKMTEQEIYARDLGLLEKSDALIAEVTVPSTGVGYEICRALVRKIPVLCLHMPDVAVSSMVLGNPDTLMEVRSYPDKEALKEIIIDFIRAL.

Substrate is bound by residues 27 to 33 (FLSGSIR), Tyr-42, His-60, Glu-106, and 128 to 130 (SSM).

This sequence belongs to the 2'-deoxynucleoside 5'-phosphate N-hydrolase 1 family. In terms of assembly, monomer and homodimer.

The catalysed reaction is a pyrimidine 2'-deoxyribonucleoside 5'-phosphate + H2O = a pyrimidine nucleobase + 2-deoxy-D-ribose 5-phosphate. The enzyme catalyses a purine 2'-deoxyribonucleoside 5'-phosphate + H2O = a purine nucleobase + 2-deoxy-D-ribose 5-phosphate. Its function is as follows. Catalyzes the cleavage of the N-glycosidic bond of deoxyribonucleoside 5'-monophosphates to yield deoxyribose 5-phosphate and a purine or pyrimidine base. The polypeptide is Putative 2'-deoxynucleoside 5'-phosphate N-hydrolase 1 (Methanosarcina mazei (strain ATCC BAA-159 / DSM 3647 / Goe1 / Go1 / JCM 11833 / OCM 88) (Methanosarcina frisia)).